Consider the following 357-residue polypeptide: Alanine racemase, catabolic (357 aa).

Lysine 33 functions as the Proton acceptor; specific for D-alanine in the catalytic mechanism. Lysine 33 is subject to N6-(pyridoxal phosphate)lysine. Arginine 129 is a substrate binding site. The Proton acceptor; specific for L-alanine role is filled by tyrosine 253. Methionine 301 is a binding site for substrate.

It belongs to the alanine racemase family. The cofactor is pyridoxal 5'-phosphate.

The catalysed reaction is L-alanine = D-alanine. Its pathway is amino-acid biosynthesis; D-alanine biosynthesis; D-alanine from L-alanine: step 1/1. Isomerizes L-alanine to D-alanine which is then likely oxidized to pyruvate by DadA. Shows racemase activity with both alanine stereoisomers, negligible activity with D-cysteine and L-serine, and exhibits no activity with the remaining natural chiral amino acids. The protein is Alanine racemase, catabolic of Pseudomonas putida (strain ATCC 47054 / DSM 6125 / CFBP 8728 / NCIMB 11950 / KT2440).